We begin with the raw amino-acid sequence, 235 residues long: Pyridoxine 5'-phosphate synthase (235 aa).

A 3-amino-2-oxopropyl phosphate-binding site is contributed by asparagine 6. 8 to 9 lines the 1-deoxy-D-xylulose 5-phosphate pocket; sequence DH. Arginine 17 serves as a coordination point for 3-amino-2-oxopropyl phosphate. The active-site Proton acceptor is histidine 42. 1-deoxy-D-xylulose 5-phosphate is bound by residues arginine 44 and histidine 49. Glutamate 69 acts as the Proton acceptor in catalysis. Residue threonine 99 participates in 1-deoxy-D-xylulose 5-phosphate binding. Histidine 188 serves as the catalytic Proton donor. 3-amino-2-oxopropyl phosphate is bound by residues glycine 189 and 210–211; that span reads GH.

Belongs to the PNP synthase family. As to quaternary structure, homooctamer; tetramer of dimers.

The protein resides in the cytoplasm. The catalysed reaction is 3-amino-2-oxopropyl phosphate + 1-deoxy-D-xylulose 5-phosphate = pyridoxine 5'-phosphate + phosphate + 2 H2O + H(+). It participates in cofactor biosynthesis; pyridoxine 5'-phosphate biosynthesis; pyridoxine 5'-phosphate from D-erythrose 4-phosphate: step 5/5. Functionally, catalyzes the complicated ring closure reaction between the two acyclic compounds 1-deoxy-D-xylulose-5-phosphate (DXP) and 3-amino-2-oxopropyl phosphate (1-amino-acetone-3-phosphate or AAP) to form pyridoxine 5'-phosphate (PNP) and inorganic phosphate. This Wolbachia sp. subsp. Drosophila simulans (strain wRi) protein is Pyridoxine 5'-phosphate synthase.